Here is a 328-residue protein sequence, read N- to C-terminus: 4-hydroxythreonine-4-phosphate dehydrogenase (328 aa).

Substrate contacts are provided by histidine 134 and threonine 135. A divalent metal cation-binding residues include histidine 164, histidine 209, and histidine 264. Substrate contacts are provided by lysine 272, asparagine 281, and arginine 290.

Belongs to the PdxA family. Homodimer. The cofactor is Zn(2+). Mg(2+) serves as cofactor. It depends on Co(2+) as a cofactor.

It is found in the cytoplasm. The enzyme catalyses 4-(phosphooxy)-L-threonine + NAD(+) = 3-amino-2-oxopropyl phosphate + CO2 + NADH. Its pathway is cofactor biosynthesis; pyridoxine 5'-phosphate biosynthesis; pyridoxine 5'-phosphate from D-erythrose 4-phosphate: step 4/5. In terms of biological role, catalyzes the NAD(P)-dependent oxidation of 4-(phosphooxy)-L-threonine (HTP) into 2-amino-3-oxo-4-(phosphooxy)butyric acid which spontaneously decarboxylates to form 3-amino-2-oxopropyl phosphate (AHAP). In Shewanella denitrificans (strain OS217 / ATCC BAA-1090 / DSM 15013), this protein is 4-hydroxythreonine-4-phosphate dehydrogenase.